We begin with the raw amino-acid sequence, 318 residues long: Probable cell division protein WhiA (318 aa).

The H-T-H motif DNA-binding region spans 276–310 (TLQELGEMVESGSISKSGINHRLRKIDQIADKIRN).

Belongs to the WhiA family.

Functionally, involved in cell division and chromosome segregation. This Exiguobacterium sibiricum (strain DSM 17290 / CCUG 55495 / CIP 109462 / JCM 13490 / 255-15) protein is Probable cell division protein WhiA.